A 276-amino-acid polypeptide reads, in one-letter code: Octopine-binding periplasmic protein (276 aa).

Residues 1-20 (MKLKTILCAALLLVAGQAAA) form the signal peptide. A disulfide bond links Cys57 and Cys64.

The protein belongs to the bacterial solute-binding protein 3 family.

It is found in the periplasm. Its function is as follows. Component of the octopine active transport system probably consisting of four subunits: Q, M, P and T. This chain is Octopine-binding periplasmic protein (occT), found in Agrobacterium tumefaciens (strain Ach5).